Consider the following 1022-residue polypeptide: Leucine--tRNA ligase (1022 aa).

Positions 47–57 (PYPNSPMHLGH) match the 'HIGH' region motif. Positions 697–701 (KMSKS) match the 'KMSKS' region motif. Lysine 700 is a binding site for ATP.

Belongs to the class-I aminoacyl-tRNA synthetase family.

Its subcellular location is the cytoplasm. The enzyme catalyses tRNA(Leu) + L-leucine + ATP = L-leucyl-tRNA(Leu) + AMP + diphosphate. The polypeptide is Leucine--tRNA ligase (Ignicoccus hospitalis (strain KIN4/I / DSM 18386 / JCM 14125)).